Here is a 272-residue protein sequence, read N- to C-terminus: N-acetylmuramoyl-L-alanine amidase CwlA (272 aa).

The 119-residue stretch at 24-142 (KAEYITIHNT…QDWNGKYCPH (119 aa)) folds into the N-acetylmuramoyl-L-alanine amidase domain.

The protein belongs to the N-acetylmuramoyl-L-alanine amidase 2 family.

The enzyme catalyses Hydrolyzes the link between N-acetylmuramoyl residues and L-amino acid residues in certain cell-wall glycopeptides.. In terms of biological role, autolysins are involved in some important biological processes such as cell separation, cell-wall turnover, competence for genetic transformation, formation of the flagella and sporulation. The protein is N-acetylmuramoyl-L-alanine amidase CwlA (cwlA) of Bacillus subtilis (strain 168).